A 232-amino-acid polypeptide reads, in one-letter code: Ribonuclease 3 (232 aa).

The RNase III domain maps to 5-134 (QTVLKNHFAI…FLGALLLDKD (130 aa)). Residue glutamate 47 coordinates Mg(2+). Residue aspartate 51 is part of the active site. Aspartate 120 and glutamate 123 together coordinate Mg(2+). Glutamate 123 is a catalytic residue. One can recognise a DRBM domain in the interval 160–229 (DYKTHLQELL…AKNAVEKGLD (70 aa)).

It belongs to the ribonuclease III family. As to quaternary structure, homodimer. It depends on Mg(2+) as a cofactor.

Its subcellular location is the cytoplasm. It catalyses the reaction Endonucleolytic cleavage to 5'-phosphomonoester.. Functionally, digests double-stranded RNA. Involved in the processing of primary rRNA transcript to yield the immediate precursors to the large and small rRNAs (23S and 16S). Processes some mRNAs, and tRNAs when they are encoded in the rRNA operon. Processes pre-crRNA and tracrRNA of type II CRISPR loci if present in the organism. The protein is Ribonuclease 3 of Streptococcus pneumoniae (strain CGSP14).